A 384-amino-acid chain; its full sequence is Guanine nucleotide-binding protein alpha-1 subunit (384 aa).

The disordered stretch occupies residues 1-22 (MGSLCSRNKHYSQADDEENTQT). A lipid anchor (N-myristoyl glycine) is attached at G2. C5 is lipidated: S-palmitoyl cysteine. In terms of domain architecture, G-alpha spans 38 to 384 (HIQKLLLLGA…RRNLFEAGLL (347 aa)). Positions 41–54 (KLLLLGAGDSGKST) are G1 motif. 14 residues coordinate GTP: D49, S50, G51, K52, S53, T54, D163, L188, T194, G222, N288, K289, D291, and A356. Position 53 (S53) interacts with Mg(2+). Positions 186–194 (DVLFARIRT) are G2 motif. Residue T194 participates in Mg(2+) binding. Residues 215–224 (YRLFDVGGQR) form a G3 motif region. The interval 284-291 (MLFLNKFD) is G4 motif. Residues 354 to 359 (TTALDQ) are G5 motif.

This sequence belongs to the G-alpha family. In terms of assembly, g proteins are composed of 3 units; alpha, beta and gamma. The alpha chain contains the guanine nucleotide binding site. It depends on Mg(2+) as a cofactor.

Functionally, guanine nucleotide-binding proteins (G proteins) are involved as modulators or transducers in various transmembrane signaling systems. The polypeptide is Guanine nucleotide-binding protein alpha-1 subunit (GPA1) (Solanum tuberosum (Potato)).